Reading from the N-terminus, the 349-residue chain is MAFKIASSPHVTRNLHTSTVMQRVILCLLPGLVVQCAFFGWGTLIQVLLAIIVALSCEAAVMKLRNRSIKASLSDNSAMLTAILIGVAIPPLAPWWMIVMGTVFAIVIVKHLYGGLGHNLFNPAMAAYVLLLVSFPVQMTSWIAPSTVALNTPSVIDSLQLIFNVGAHGGMEQFRLGIDGISMATPLDTLKTDLSLGLTTTESMAKSIFDGGTGVGWFWVNLAYLAGGLVLLKLKAIRWHISTGVLAGLFVASSIGFLLSPDTQASPLFHLFSGATMLAAFFIATDPVTAATSPRGRLIFGALIGVLVYIIRTQGGYPDAFAFAVLLANLCAPFIDYYVRPRTYGHSAP.

3 helical membrane passes run 36-56 (CAFF…VALS), 77-99 (SAML…WMIV), and 124-144 (AMAA…SWIA). Thr185 is modified (FMN phosphoryl threonine). The next 5 membrane-spanning stretches (helical) occupy residues 212–232 (GTGV…LVLL), 239–259 (WHIS…GFLL), 265–285 (ASPL…FIAT), 291–311 (ATSP…VYII), and 315–335 (GGYP…APFI).

This sequence belongs to the NqrB/RnfD family. In terms of assembly, the complex is composed of six subunits: RnfA, RnfB, RnfC, RnfD, RnfE and RnfG. FMN is required as a cofactor.

It localises to the cell inner membrane. Functionally, part of a membrane-bound complex that couples electron transfer with translocation of ions across the membrane. The sequence is that of Ion-translocating oxidoreductase complex subunit D from Shewanella sp. (strain ANA-3).